The sequence spans 129 residues: MSASIARATVRAVSRRKILSTRAALTLTPSAVNKVKQLLDNKPEYIGLKVGVRTRGCNGLTYTLDYTKNKEQSDEEVLQDGVRVFIEKKAQLTLLGTEMDFVETKLSSEFVFNNPNIKGTCGCGESFNI.

Residues 1 to 12 (MSASIARATVRA) constitute a mitochondrion transit peptide. Residues Cys57, Cys121, and Cys123 each coordinate Fe cation.

Belongs to the HesB/IscA family.

It is found in the mitochondrion. Functionally, involved in the maturation of mitochondrial 4Fe-4S proteins functioning late in the iron-sulfur cluster assembly pathway. Probably involved in the binding of an intermediate of Fe/S cluster assembly. In Danio rerio (Zebrafish), this protein is Iron-sulfur cluster assembly 1 homolog, mitochondrial (isca1).